Reading from the N-terminus, the 213-residue chain is StAR-related lipid transfer protein 5 (213 aa).

The region spanning 1-213 (MDPSWATQES…LQKAVRKFHH (213 aa)) is the START domain.

In terms of tissue distribution, expressed in most tissues, with highest levels in liver and in kidney.

Functionally, may be involved in the intracellular transport of sterols or other lipids. May bind cholesterol or other sterols. The sequence is that of StAR-related lipid transfer protein 5 (Stard5) from Mus musculus (Mouse).